Consider the following 439-residue polypeptide: Histidinol dehydrogenase (439 aa).

Residues Y127, Q185, and N208 each coordinate NAD(+). Residues S234, Q256, and H259 each coordinate substrate. 2 residues coordinate Zn(2+): Q256 and H259. Residues E323 and H324 each act as proton acceptor in the active site. Positions 324, 357, 411, and 416 each coordinate substrate. Position 357 (D357) interacts with Zn(2+). Position 416 (H416) interacts with Zn(2+).

Belongs to the histidinol dehydrogenase family. Zn(2+) is required as a cofactor.

The enzyme catalyses L-histidinol + 2 NAD(+) + H2O = L-histidine + 2 NADH + 3 H(+). It participates in amino-acid biosynthesis; L-histidine biosynthesis; L-histidine from 5-phospho-alpha-D-ribose 1-diphosphate: step 9/9. Its function is as follows. Catalyzes the sequential NAD-dependent oxidations of L-histidinol to L-histidinaldehyde and then to L-histidine. The polypeptide is Histidinol dehydrogenase (Aliivibrio fischeri (strain ATCC 700601 / ES114) (Vibrio fischeri)).